The chain runs to 81 residues: Sulfur carrier protein TusA (81 aa).

Cys-19 serves as the catalytic Cysteine persulfide intermediate.

Belongs to the sulfur carrier protein TusA family.

The protein localises to the cytoplasm. In terms of biological role, sulfur carrier protein which probably makes part of a sulfur-relay system. The chain is Sulfur carrier protein TusA from Shewanella sp. (strain MR-4).